The sequence spans 305 residues: MGLFSRDKPKIKIQTTKKDGFSGWLKCTHCNELIHANELEQNSNCCPKCDYHYRLSTEDRIKSLSNPNTFKPLFQNLQPVDTLNFVDTEPYPKRLANAQEKSTSNEAVVVGTCMINKHKIALGVLDFSFMGGSMGSVVGERLTRLIEHALKEKLPLIIVSTSGGARMQESILSLMQMAKTSGALAKLHEARIPYISVLTNPTTGGVTASFASLGDIIVAEPNALICFAGPRVIEQTIGQRLPPGAQKSEFLLEHGMIDCIVKRPELKQKLAELIDFLKGNFSEENEPSPPPKNLIKKTSPLKDKN.

The 270-residue stretch at 23–292 (GWLKCTHCNE…EENEPSPPPK (270 aa)) folds into the CoA carboxyltransferase N-terminal domain. Zn(2+)-binding residues include Cys27, Cys30, Cys46, and Cys49. The segment at 27-49 (CTHCNELIHANELEQNSNCCPKC) adopts a C4-type zinc-finger fold. The segment at 281-305 (FSEENEPSPPPKNLIKKTSPLKDKN) is disordered.

This sequence belongs to the AccD/PCCB family. Acetyl-CoA carboxylase is a heterohexamer composed of biotin carboxyl carrier protein (AccB), biotin carboxylase (AccC) and two subunits each of ACCase subunit alpha (AccA) and ACCase subunit beta (AccD). Requires Zn(2+) as cofactor.

It localises to the cytoplasm. It catalyses the reaction N(6)-carboxybiotinyl-L-lysyl-[protein] + acetyl-CoA = N(6)-biotinyl-L-lysyl-[protein] + malonyl-CoA. The protein operates within lipid metabolism; malonyl-CoA biosynthesis; malonyl-CoA from acetyl-CoA: step 1/1. In terms of biological role, component of the acetyl coenzyme A carboxylase (ACC) complex. Biotin carboxylase (BC) catalyzes the carboxylation of biotin on its carrier protein (BCCP) and then the CO(2) group is transferred by the transcarboxylase to acetyl-CoA to form malonyl-CoA. The sequence is that of Acetyl-coenzyme A carboxylase carboxyl transferase subunit beta from Protochlamydia amoebophila (strain UWE25).